A 405-amino-acid chain; its full sequence is Argininosuccinate synthase (405 aa).

Residues 10–18 (AYSGGLDTS) and Ala37 each bind ATP. L-citrulline-binding residues include Tyr88 and Ser93. Gly118 provides a ligand contact to ATP. 3 residues coordinate L-aspartate: Thr120, Asn124, and Asp125. Asn124 is an L-citrulline binding site. Arg128, Ser179, Ser188, Glu264, and Tyr276 together coordinate L-citrulline.

It belongs to the argininosuccinate synthase family. Type 1 subfamily. As to quaternary structure, homotetramer.

The protein resides in the cytoplasm. The enzyme catalyses L-citrulline + L-aspartate + ATP = 2-(N(omega)-L-arginino)succinate + AMP + diphosphate + H(+). It participates in amino-acid biosynthesis; L-arginine biosynthesis; L-arginine from L-ornithine and carbamoyl phosphate: step 2/3. The chain is Argininosuccinate synthase from Pseudomonas fluorescens (strain Pf0-1).